A 403-amino-acid chain; its full sequence is Large ribosomal subunit protein uL3 (403 aa).

A disordered region spans residues 1–37 (MSHRKFSAPRHGSLGFLPRKRSSRHRGKVKSFPKDDP). Ser13 bears the Phosphoserine mark. The segment covering 18–31 (PRKRSSRHRGKVKS) has biased composition (basic residues). Lys39 is covalently cross-linked (Glycyl lysine isopeptide (Lys-Gly) (interchain with G-Cter in SUMO2)). Position 136 is an N6-acetyllysine (Lys136). Glycyl lysine isopeptide (Lys-Gly) (interchain with G-Cter in SUMO2) cross-links involve residues Lys224 and Lys226. Residue His245 is modified to Tele-methylhistidine. N6-acetyllysine; alternate is present on residues Lys286 and Lys294. Lys286 is covalently cross-linked (Glycyl lysine isopeptide (Lys-Gly) (interchain with G-Cter in SUMO2); alternate). Residue Lys294 forms a Glycyl lysine isopeptide (Lys-Gly) (interchain with G-Cter in SUMO1); alternate linkage. Ser304 carries the phosphoserine modification. An N6-acetyllysine; alternate modification is found at Lys366. Lys366 is covalently cross-linked (Glycyl lysine isopeptide (Lys-Gly) (interchain with G-Cter in SUMO2); alternate). Position 373 is an N6-acetyllysine (Lys373). Glycyl lysine isopeptide (Lys-Gly) (interchain with G-Cter in SUMO2) cross-links involve residues Lys386, Lys393, and Lys399.

The protein belongs to the universal ribosomal protein uL3 family. As to quaternary structure, component of the large ribosomal subunit. Interacts with DHX33. Constitutively monomethylated at His-245 by METTL18. Methylation at His-245 regulates translation elongation by slowing ribosome traversal on tyrosine codons: slower elongation provides enough time for proper folding of synthesized proteins and prevents cellular aggregation of tyrosine-rich proteins It is not required for incorporation of RPL3 into ribosomes.

It is found in the nucleus. It localises to the nucleolus. The protein resides in the cytoplasm. Component of the large ribosomal subunit. The ribosome is a large ribonucleoprotein complex responsible for the synthesis of proteins in the cell. This is Large ribosomal subunit protein uL3 (RPL3) from Macaca fascicularis (Crab-eating macaque).